A 401-amino-acid polypeptide reads, in one-letter code: Alkane 1-monooxygenase (401 aa).

The Cytoplasmic segment spans residues 1-20; the sequence is MLEKHRVLDSAPEYVDKKKY. Residues 21-39 form a helical membrane-spanning segment; that stretch reads LWILSTLWPATPMIGIWLA. At 40–41 the chain is on the periplasmic side; that stretch reads NE. The chain crosses the membrane as a helical span at residues 42–62; the sequence is TGWGIFYGLVLLVWYGALPLL. Residues 63–88 are Cytoplasmic-facing; the sequence is DAMFGEDFNNPPEEVVPKLEKERYYR. The chain crosses the membrane as a helical span at residues 89–111; that stretch reads VLTYLTVPMHYAALIVSAWWVGT. At 112-113 the chain is on the periplasmic side; that stretch reads QP. The chain crosses the membrane as a helical span at residues 114–134; the sequence is MSWLEIGALALSLGIVNGLAL. At 135–228 the chain is on the cytoplasmic side; it reads NTGHELGHKK…QSVWSFDNEI (94 aa). Positions 138, 142, 168, 172, and 173 each coordinate Fe cation. A helical transmembrane segment spans residues 229 to 249; that stretch reads LQPMIITVILYAVLLALFGPK. A topological domain (periplasmic) is located at residue Met250. The helical transmembrane segment at 251-270 threads the bilayer; the sequence is LVFLPIQMAFGWWQLTSANY. Residues 271 to 401 lie on the Cytoplasmic side of the membrane; the sequence is IEHYGLLRQK…HSSSTSAVAS (131 aa). The Fe cation site is built by His312, His315, and His316.

It belongs to the fatty acid desaturase type 1 family. AlkB subfamily. Fe(3+) is required as a cofactor.

It is found in the cell inner membrane. The enzyme catalyses octane + 2 reduced [rubredoxin] + O2 + 2 H(+) = 2 oxidized [rubredoxin] + octan-1-ol + H2O. It participates in hydrocarbon metabolism; alkane degradation. Catalyzes the hydroxylation of n-alkanes and fatty acids in the presence of a NADH-rubredoxin reductase and rubredoxin. This Ectopseudomonas oleovorans (Pseudomonas oleovorans) protein is Alkane 1-monooxygenase (alkB).